We begin with the raw amino-acid sequence, 89 residues long: Protein YxiC (89 aa).

This is Protein YxiC (yxiC) from Bacillus subtilis (strain 168).